The sequence spans 314 residues: Serine/threonine-protein phosphatase CPPED1 (314 aa).

At Ser2 the chain carries Phosphoserine. The catalytic stretch occupies residues Lys47–Arg250. Residues Asp53, Asp90, Asn127, and His247 each coordinate a divalent metal cation. Ser294 is subject to Phosphoserine.

Belongs to the metallophosphoesterase superfamily. CPPED1 family. Requires a divalent metal cation as cofactor. In terms of tissue distribution, expressed in subcutaneous adipose tissue.

It is found in the cytoplasm. The catalysed reaction is O-phospho-L-seryl-[protein] + H2O = L-seryl-[protein] + phosphate. It carries out the reaction O-phospho-L-threonyl-[protein] + H2O = L-threonyl-[protein] + phosphate. Its function is as follows. Protein phosphatase that dephosphorylates AKT family kinase specifically at 'Ser-473', blocking cell cycle progression and promoting cell apoptosis. May play an inhibitory role in glucose uptake by adipocytes. This Homo sapiens (Human) protein is Serine/threonine-protein phosphatase CPPED1 (CPPED1).